The chain runs to 260 residues: MAHCMESALLLLLLLGSASFTDGNRCVDAAEACTADERCQQLRSEYVARCLGRAAPGGRPGPGGCVRSRCRRALRRFFARGPPALTHALLFCGCEGSACAERRRQTFAPACAFSGPGLVPPSCLEPLERCERSRLCRPRLLAFQASCAPAPGSRDRCPEEGGPRCLRVYAGLIGTVVTPNYLDNVSARVAPWCGCAASGNRREECEAFRKLFTRNPCLDGAIQAFDSLQPSVLQDQTAGCCFPRVSWLYALTALALQALL.

The signal sequence occupies residues 1-23; the sequence is MAHCMESALLLLLLLGSASFTDG. N-linked (GlcNAc...) asparagine glycosylation is present at Asn-184. Thr-237 is lipidated: GPI-anchor amidated threonine. Positions 238–260 are cleaved as a propeptide — removed in mature form; that stretch reads AGCCFPRVSWLYALTALALQALL.

It belongs to the GDNFR family. As to quaternary structure, interacts with ARTN ligand and RET: forms a 2:2:2 ternary complex composed of ARTN ligand, GFRA3 and RET receptor. Interacts with SORL1. As to expression, expressed in many tissues including adrenal medulla, brain neurons, with highest levels in the cerebral cortex and hippocampus. Moderate levels found in the gut circular muscle and myenteric ganglia as well as in other peripheral ganglia, including the sensory dorsal root and trigeminal as well as superior cervical and sympathetic chain ganglia. Isoform a1, isoform a2, isoform b1 and isoform b2 are exclusively found in the thyroid, parthyroid and pituitary glands.

Its subcellular location is the cell membrane. It localises to the secreted. Receptor for persephin (PSPN), a growth factor that exhibits neurotrophic activity on mesencephalic dopaminergic and motor neurons. Acts by binding to its coreceptor, GFRA4, leading to autophosphorylation and activation of the RET receptor. May be important in C-cell development and, in the postnatal development of the adrenal medulla. The protein is GDNF family receptor alpha-4 (Gfra4) of Mus musculus (Mouse).